Consider the following 186-residue polypeptide: Protein Syd (186 aa).

This sequence belongs to the Syd family.

The protein localises to the cell inner membrane. In terms of biological role, interacts with the SecY protein in vivo. May bind preferentially to an uncomplexed state of SecY, thus functioning either as a chelating agent for excess SecY in the cell or as a regulatory factor that negatively controls the translocase function. The chain is Protein Syd from Pseudoalteromonas atlantica (strain T6c / ATCC BAA-1087).